Reading from the N-terminus, the 606-residue chain is uncharacterized protein (606 aa).

This is an uncharacterized protein from Sinorhizobium fredii (strain NBRC 101917 / NGR234).